The primary structure comprises 467 residues: Probable amino acid permease 7 (467 aa).

Residues 1–29 (MDIKEDDESRVITPTELQLHDSVTARTGT) lie on the Cytoplasmic side of the membrane. A helical transmembrane segment spans residues 30–50 (LWTAVAHIITGVIGAGVLSLA). Residues 51–58 (WATAELGW) lie on the Extracellular side of the membrane. Residues 59 to 79 (IAGPAALIAFAGVTLLSAFLL) form a helical membrane-spanning segment. The Cytoplasmic portion of the chain corresponds to 80–111 (SDCYRFPDPNNGPLRLNSYSQAVKLYLGKKNE). The helical transmembrane segment at 112–132 (IVCGVVVYISLFGCGIAYTIV) threads the bilayer. The Extracellular portion of the chain corresponds to 133–163 (IATCSRAIMKSNCYHRNGHNATCSYGDNNNY). Transmembrane regions (helical) follow at residues 164 to 184 (FMVL…FHNM) and 185 to 205 (VWLS…GIGL). Residues 206-231 (ALGKIIENRKIEGSIRGIPAENRGEK) lie on the Extracellular side of the membrane. A helical membrane pass occupies residues 232–252 (VWIVFQALGNIAFSYPFSIIL). Residues 253–274 (LEIQDTLRSPPAEKQTMKKAST) are Cytoplasmic-facing. Residues 275-295 (VAVFIQTFFFFCCGCFGYAAF) traverse the membrane as a helical segment. The Extracellular segment spans residues 296–312 (GDSTPGNLLTGFGFYEP). The helical transmembrane segment at 313–333 (FWLVDFANACIVLHLVGGYQV) threads the bilayer. Over 334-383 (YSQPIFAAAERSLTKKYPENKFIARFYGFKLPLLRGETVRLNPMRMCLRT) the chain is Cytoplasmic. 2 helical membrane-spanning segments follow: residues 384-404 (MYVL…EVLG) and 405-425 (VVGA…MCIL). Over 426–443 (QKKIRSWTRPWLLLRGFS) the chain is Cytoplasmic. A helical transmembrane segment spans residues 444–464 (FVCLLVCLLSLVGSIYGLVGA). The Extracellular portion of the chain corresponds to 465 to 467 (KFG).

Belongs to the amino acid/polyamine transporter 2 family. Amino acid/auxin permease (AAAP) (TC 2.A.18.2) subfamily.

It localises to the cell membrane. Its function is as follows. Amino acid-proton symporter. Stereospecific transporter with a broad specificity for neutral amino acids. The protein is Probable amino acid permease 7 (AAP7) of Arabidopsis thaliana (Mouse-ear cress).